Consider the following 145-residue polypeptide: Bacilliredoxin SAR1441 (145 aa).

This sequence belongs to the bacilliredoxin family.

The polypeptide is Bacilliredoxin SAR1441 (Staphylococcus aureus (strain MRSA252)).